The sequence spans 87 residues: uncharacterized protein (87 aa).

Residues 52–87 (KWQPRPDANNSDTTTSTEDSTTDTETEYSTTEDELA) form a disordered region. Over residues 71–87 (STTDTETEYSTTEDELA) the composition is skewed to acidic residues.

This is an uncharacterized protein from Autographa californica nuclear polyhedrosis virus (AcMNPV).